Here is a 210-residue protein sequence, read N- to C-terminus: Homeobox protein Rhox5 (210 aa).

Positions 1–119 (MEAEGSSRKV…GNPGGRQMPL (119 aa)) are disordered. The segment covering 17–30 (GVKEDSEEQHDVKA) has biased composition (basic and acidic residues). The span at 47–79 (GQPGVGAVGTEGEGEELNGGKGHFGPGAPGPMG) shows a compositional bias: gly residues. Residues 117–175 (MPLQGSRFAQHRLRELESILQRTNSFDVPREDLDRLMDACVSRVQNWFKIRRAAARRTR) constitute a DNA-binding region (homeobox; atypical).

Its subcellular location is the nucleus. Its function is as follows. Transcription factor required for differentiation of embryonic stem cells (ESCs) into primordial germ cells. This Mus musculus (Mouse) protein is Homeobox protein Rhox5 (Rhox5).